We begin with the raw amino-acid sequence, 504 residues long: uncharacterized protein (504 aa).

The disordered stretch occupies residues 36-60; sequence TAFRMEKEQRLPSQNKPPRGRRRPD. Residues 125–309 enclose the Integrase catalytic domain; that stretch reads QTHEPGRLGL…RPHLQVLPER (185 aa).

This is an uncharacterized protein from Sinorhizobium fredii (strain NBRC 101917 / NGR234).